A 987-amino-acid polypeptide reads, in one-letter code: Pro-apoptotic serine protease NMA111 (987 aa).

A disordered region spans residues 1–29; the sequence is MPDIPTKRRLSNGSVIDNTNKRQMQSSFV. A compositionally biased stretch (polar residues) spans 11–28; the sequence is SNGSVIDNTNKRQMQSSF. Residues 69–262 form a serine protease region; sequence VKSVVSIQFT…LPVYRPLRAL (194 aa). Residues His-110, Asp-141, and Ser-224 each act as charge relay system in the active site. PDZ domains lie at 279–364 and 878–950; these read EWSL…VVIQ and PHHG…VSFD.

The protein belongs to the peptidase S1C family.

The protein localises to the nucleus. Its function is as follows. Nuclear serine protease which mediates apoptosis. This chain is Pro-apoptotic serine protease NMA111 (NMA111), found in Debaryomyces hansenii (strain ATCC 36239 / CBS 767 / BCRC 21394 / JCM 1990 / NBRC 0083 / IGC 2968) (Yeast).